The following is a 525-amino-acid chain: ADP-ribosylation factor GTPase-activating protein 3 (525 aa).

The Arf-GAP domain maps to 10-126 (LAIFKRLRSV…IKTLATQATR (117 aa)). The C4-type zinc finger occupies 25–48 (CFDCGAKNPSWASISYGVFLCIDC). The disordered stretch occupies residues 160–233 (VSGATQASAQ…KGLGAKKGSL (74 aa)). The span at 162–177 (GATQASAQPEPASSTP) shows a compositional bias: polar residues. Positions 222 to 233 (AKKGLGAKKGSL) are enriched in low complexity. 4 positions are modified to phosphoserine: Ser-232, Ser-242, Ser-271, and Ser-275. The segment at 249 to 271 (QAQAVDKRKEQEDLARGTPKEES) is disordered. Residues 293–305 (LNLSGQKKAEAER) are compositionally biased toward basic and acidic residues. Disordered stretches follow at residues 293 to 364 (LNLS…SSSR) and 377 to 428 (FSSW…EAQK). Over residues 319 to 333 (HSVTSDMQTIEQESP) the composition is skewed to polar residues. A Phosphoserine modification is found at Ser-332. Residues 349 to 363 (SYFSSSSKWSEQSSS) show a composition bias toward low complexity. Ser-379 is subject to Phosphoserine. Residues 387–398 (YWKKDSSRDPEP) are compositionally biased toward basic and acidic residues. A phosphoserine mark is found at Ser-437, Ser-460, Ser-462, Ser-464, Ser-466, and Ser-467.

The protein resides in the cytoplasm. The protein localises to the golgi apparatus membrane. With respect to regulation, GAP activity stimulated by phosphatidylinositol 4,5-bisphosphate (PIP2). GTPase-activating protein (GAP) for ADP ribosylation factor 1 (ARF1). Hydrolysis of ARF1-bound GTP may lead to dissociation of coatomer from Golgi-derived membranes to allow fusion with target membranes. The polypeptide is ADP-ribosylation factor GTPase-activating protein 3 (Rattus norvegicus (Rat)).